The primary structure comprises 800 residues: U4/U6.U5 tri-snRNP-associated protein 1 (800 aa).

Positions 1–120 (MGSSKKHRGE…SSGDASSLSI (120 aa)) are disordered. Basic residues predominate over residues 32–42 (HREHKKHKHRS). A compositionally biased stretch (basic and acidic residues) spans 58–101 (ERGGERGSGRRGAEAEARSSTHGRERSQAEPSERRVKREKRDDG). Positions 104–119 (AAASSKTSSGDASSLS) are enriched in low complexity. Glycyl lysine isopeptide (Lys-Gly) (interchain with G-Cter in SUMO2) cross-links involve residues K125 and K133. K141 is covalently cross-linked (Glycyl lysine isopeptide (Lys-Gly) (interchain with G-Cter in SUMO1); alternate). Residue K141 forms a Glycyl lysine isopeptide (Lys-Gly) (interchain with G-Cter in SUMO2); alternate linkage. Glycyl lysine isopeptide (Lys-Gly) (interchain with G-Cter in SUMO2) cross-links involve residues K147 and K188. The stretch at 157–231 (NPMALRQREE…KLLEEMDQEF (75 aa)) forms a coiled coil. T189 carries the post-translational modification Phosphothreonine. K277 is covalently cross-linked (Glycyl lysine isopeptide (Lys-Gly) (interchain with G-Cter in SUMO2)). Residues 311–330 (PDYLPYAEDESVDDLAQQKP) are disordered. The residue at position 321 (S321) is a Phosphoserine. Residues K329 and K336 each participate in a glycyl lysine isopeptide (Lys-Gly) (interchain with G-Cter in SUMO2) cross-link. The residue at position 348 (S348) is a Phosphoserine. At T392 the chain carries Phosphothreonine. Residues K400 and K414 each participate in a glycyl lysine isopeptide (Lys-Gly) (interchain with G-Cter in SUMO2) cross-link. The disordered stretch occupies residues 419-497 (RADDLLPLGD…QVLEEDEAEL (79 aa)). T430 carries the post-translational modification Phosphothreonine. Phosphoserine is present on residues S448, S474, S486, and S521. Residues 490 to 533 (LEEDEAELELQKQLEKGRRLRQLQQLQQLRDSGEKVVEIVKKLE) adopt a coiled-coil conformation. Residue K548 forms a Glycyl lysine isopeptide (Lys-Gly) (interchain with G-Cter in SUMO2) linkage. Residues 571–604 (LAGNREEQEELMDFERDEERSANGGSESDGEENI) are disordered. Phosphoserine occurs at positions 591, 596, 598, and 621. Residues K648, K657, and K684 each participate in a glycyl lysine isopeptide (Lys-Gly) (interchain with G-Cter in SUMO2) cross-link. T695 is modified (phosphothreonine). Residues K699, K709, K723, K749, and K758 each participate in a glycyl lysine isopeptide (Lys-Gly) (interchain with G-Cter in SUMO2) cross-link. S761 carries the post-translational modification Phosphoserine. T764 carries the post-translational modification Phosphothreonine. Residues K775 and K780 each participate in a glycyl lysine isopeptide (Lys-Gly) (interchain with G-Cter in SUMO2) cross-link. S789 bears the Phosphoserine mark. K791 participates in a covalent cross-link: Glycyl lysine isopeptide (Lys-Gly) (interchain with G-Cter in SUMO2).

This sequence belongs to the SNU66/SART1 family. As to quaternary structure, identified in the spliceosome C complex. Component of the U4/U6-U5 tri-snRNP complex composed of the U4, U6 and U5 snRNAs and at least PRPF3, PRPF4, PRPF6, PRPF8, PRPF31, SNRNP200, TXNL4A, SNRNP40, DDX23, CD2BP2, PPIH, SNU13, EFTUD2, SART1 and USP39. Interacts with UBL5. Interacts with IVNS1ABP (via Kelch repeats). In terms of processing, sumoylated with SUMO2. Ubiquitously expressed.

The protein resides in the nucleus. Its function is as follows. Plays a role in mRNA splicing as a component of the U4/U6-U5 tri-snRNP, one of the building blocks of the spliceosome. May also bind to DNA. The polypeptide is U4/U6.U5 tri-snRNP-associated protein 1 (SART1) (Homo sapiens (Human)).